An 832-amino-acid polypeptide reads, in one-letter code: MFRWSCAHRLSRSLCQTRFLSTDPLLDQLKICISEDQVFQLVGKNKARLSVTHVGHAINLLWKFQKEKPRMLRTIDQVRGHPEFIALRILAENKIEFMEDNALVEILYNILRFSVEPHDSLVQQLVMEGWRRLERFNLKEISKFAVCLGEQHMHMSPLMGHIASIVDGILDDVQDARILSSLMVNIHGVITPMLRDRLVDKADSLMDTLDVSHFNHPRRIVQFLRNMKHTYRPLLEKCNNAFLQNIGQMDPENLSIIIGLYQSLQYNNSEFRLMARNRLIEMVDQCNNVASYTKLFAALGPMAGQETREKLEEGILTMVDGMNPNQLLAVLGTMEEMECRNTLLIARIASLLQKYLGIYRPVELARITQAIVNLRCQTPELFSMLQKILERNLKSSFIPGDVAMLARVISSLPAARVDEEVFSKVDAILPQCSLSDLSSLALAIVKWVRTEQPSRYSTSGGLGNLLHKLNTCGHERITKIDKIDLFLEELKYITGDWLEEVLLKDAISTCERLIDQITWKNLPEFALFITRTNYLCAPVLNKIASVATEDITKIHYNATYAILLPFVVLNYEPPNGEAFFDACIQHVLPHLNSLDPHLVVLLAYSLALAEYFPEELIKAVFNIDFLGRLDAQLETFSSTLNLRIRLRLMELNRAVCLECPEFQIPWFHDRYCKQLQHRANAGISSVQRQIHQLLGEILGGINYAKVSVMTPYYHTIDFECILDKNKKPILYLDQNVLSADLSKVQWGNGGQLQETKSLPPGAQRVAIEFLDSKAFSKNSSNIKGEYMMKKRHLEILGYHVLQISSLEWNSMELSTKDAWMDYLRKRIFTDDL.

The 61-residue stretch at 765–825 folds into the RAP domain; that stretch reads VAIEFLDSKA…KDAWMDYLRK (61 aa).

Belongs to the FAST kinase family.

It is found in the mitochondrion. May regulate the stability of some mitochondrial mRNA species. This chain is FAST kinase domain-containing protein 1, mitochondrial (fastkd1), found in Xenopus laevis (African clawed frog).